Reading from the N-terminus, the 397-residue chain is B3 domain-containing protein At4g34400 (397 aa).

Positions 14–107 form a DNA-binding region, TF-B3; that stretch reads PRFFTVFVSH…IFEVSIFRGY (94 aa). The tract at residues 118 to 255 is disordered; the sequence is ELEEEEEDSV…SSYAPDKEDT (138 aa). Positions 137–160 are enriched in basic and acidic residues; it reads TGAKSEMKNTVPEGRDKGKSKVEV. 3 stretches are compositionally biased toward acidic residues: residues 161 to 186, 212 to 227, and 235 to 246; these read VEDSDDDEEEDSVYSESSEETETDTD, SSDDEEDEEEDSDSDY, and DIEENSISEEDS.

The protein localises to the nucleus. The chain is B3 domain-containing protein At4g34400 from Arabidopsis thaliana (Mouse-ear cress).